A 134-amino-acid polypeptide reads, in one-letter code: Small ribosomal subunit protein uS8c (134 aa).

It belongs to the universal ribosomal protein uS8 family. Part of the 30S ribosomal subunit.

It is found in the plastid. The protein resides in the chloroplast. Its function is as follows. One of the primary rRNA binding proteins, it binds directly to 16S rRNA central domain where it helps coordinate assembly of the platform of the 30S subunit. This is Small ribosomal subunit protein uS8c (rps8) from Chloranthus spicatus (Chulantree).